We begin with the raw amino-acid sequence, 199 residues long: NAD(P)H dehydrogenase (quinone) (199 aa).

A Flavodoxin-like domain is found at 4-190 (VLVLYYSAYG…AGARYQGQVI (187 aa)). Residues 10–15 (SAYGHI) and 78–80 (TRF) each bind FMN. Y12 lines the NAD(+) pocket. W98 is a substrate binding site. Residues 113-119 (STATQHG) and H134 each bind FMN.

This sequence belongs to the WrbA family. It depends on FMN as a cofactor.

The enzyme catalyses a quinone + NADH + H(+) = a quinol + NAD(+). It catalyses the reaction a quinone + NADPH + H(+) = a quinol + NADP(+). In Rhodopseudomonas palustris (strain BisA53), this protein is NAD(P)H dehydrogenase (quinone).